The chain runs to 221 residues: ATP phosphoribosyltransferase (221 aa).

Belongs to the ATP phosphoribosyltransferase family. Short subfamily. Heteromultimer composed of HisG and HisZ subunits.

Its subcellular location is the cytoplasm. It carries out the reaction 1-(5-phospho-beta-D-ribosyl)-ATP + diphosphate = 5-phospho-alpha-D-ribose 1-diphosphate + ATP. It participates in amino-acid biosynthesis; L-histidine biosynthesis; L-histidine from 5-phospho-alpha-D-ribose 1-diphosphate: step 1/9. Its function is as follows. Catalyzes the condensation of ATP and 5-phosphoribose 1-diphosphate to form N'-(5'-phosphoribosyl)-ATP (PR-ATP). Has a crucial role in the pathway because the rate of histidine biosynthesis seems to be controlled primarily by regulation of HisG enzymatic activity. The polypeptide is ATP phosphoribosyltransferase (Symbiobacterium thermophilum (strain DSM 24528 / JCM 14929 / IAM 14863 / T)).